The following is a 229-amino-acid chain: Pyridoxal phosphate homeostasis protein (229 aa).

An N6-(pyridoxal phosphate)lysine modification is found at Lys-36.

This sequence belongs to the pyridoxal phosphate-binding protein YggS/PROSC family. As to quaternary structure, monomer.

In terms of biological role, pyridoxal 5'-phosphate (PLP)-binding protein, which is involved in PLP homeostasis. The polypeptide is Pyridoxal phosphate homeostasis protein (Buchnera aphidicola subsp. Schizaphis graminum (strain Sg)).